Reading from the N-terminus, the 414-residue chain is 2,3-diketo-5-methylthiopentyl-1-phosphate enolase (414 aa).

The active-site Proton acceptor is Lys99. Substrate contacts are provided by residues Lys148, 174-177 (KDDE), His265, Gly338, and 360-361 (GG). The Mg(2+) site is built by Lys174, Asp176, and Glu177. Lys174 carries the post-translational modification N6-carboxylysine.

This sequence belongs to the RuBisCO large chain family. Type IV subfamily. Homodimer. Mg(2+) is required as a cofactor.

It carries out the reaction 5-methylsulfanyl-2,3-dioxopentyl phosphate = 2-hydroxy-5-methylsulfanyl-3-oxopent-1-enyl phosphate. Its pathway is amino-acid biosynthesis; L-methionine biosynthesis via salvage pathway; L-methionine from S-methyl-5-thio-alpha-D-ribose 1-phosphate: step 3/6. Functionally, catalyzes the enolization of 2,3-diketo-5-methylthiopentyl-1-phosphate (DK-MTP-1-P) into 2-hydroxy-3-keto-5-methylthiopentenyl-1-phosphate (HK-MTPenyl-1-P). The chain is 2,3-diketo-5-methylthiopentyl-1-phosphate enolase from Bacillus anthracis (strain CDC 684 / NRRL 3495).